Consider the following 1464-residue polypeptide: DNA polymerase III PolC-type (1464 aa).

The Exonuclease domain occupies 426–582 (YVVFDVETTG…YDAEATGRLL (157 aa)).

Belongs to the DNA polymerase type-C family. PolC subfamily.

The protein localises to the cytoplasm. It catalyses the reaction DNA(n) + a 2'-deoxyribonucleoside 5'-triphosphate = DNA(n+1) + diphosphate. Functionally, required for replicative DNA synthesis. This DNA polymerase also exhibits 3' to 5' exonuclease activity. The chain is DNA polymerase III PolC-type from Streptococcus thermophilus (strain ATCC BAA-491 / LMD-9).